The following is a 460-amino-acid chain: Cysteine--tRNA ligase (460 aa).

Cys-28 provides a ligand contact to Zn(2+). The short motif at 30 to 40 (VTIYDLCHIGH) is the 'HIGH' region element. 3 residues coordinate Zn(2+): Cys-209, His-234, and Glu-238. Residues 266 to 270 (KMSKS) carry the 'KMSKS' region motif. ATP is bound at residue Lys-269.

This sequence belongs to the class-I aminoacyl-tRNA synthetase family. Monomer. It depends on Zn(2+) as a cofactor.

It localises to the cytoplasm. The enzyme catalyses tRNA(Cys) + L-cysteine + ATP = L-cysteinyl-tRNA(Cys) + AMP + diphosphate. The chain is Cysteine--tRNA ligase from Shewanella frigidimarina (strain NCIMB 400).